Here is a 519-residue protein sequence, read N- to C-terminus: Galactokinase (519 aa).

4 residues coordinate alpha-D-galactose: Arg47, Glu53, His54, and Asp56. Residues Gly159, Gly161, Ser163, and Ser164 each contribute to the ATP site. Asp209 contacts alpha-D-galactose. Asp209 acts as the Proton acceptor in catalysis. ATP is bound by residues Asn257 and Lys258. Tyr266 provides a ligand contact to alpha-D-galactose.

Belongs to the GHMP kinase family. GalK subfamily.

The enzyme catalyses alpha-D-galactose + ATP = alpha-D-galactose 1-phosphate + ADP + H(+). It functions in the pathway carbohydrate metabolism; galactose metabolism. In terms of biological role, galactokinase is a key enzyme in the galactose metabolism where it catalyzes the conversion of alpha-D-galactose to galactose 1-phosphate. Can also induce the transcription of the gal genes in response to the organism being challenged with galactose as the sole source of carbon. The protein is Galactokinase (gal1) of Schizosaccharomyces pombe (strain 972 / ATCC 24843) (Fission yeast).